We begin with the raw amino-acid sequence, 379 residues long: Cytochrome b (379 aa).

4 helical membrane passes run 33–53, 77–98, 113–133, and 178–198; these read FGSLLGICLAVQILTGLFLAM, WILRYLHANGASMFFICLYIHV, WNIGVILLFAVMATAFMGYVL, and FFAFHFLLPFIISAMVMVHLL. Heme b-binding residues include H83 and H97. Residues H182 and H196 each contribute to the heme b site. H201 is a binding site for a ubiquinone. Transmembrane regions (helical) follow at residues 226–246, 288–308, 320–340, and 347–367; these read IKDILGLLLMIMVLLMLVLFS, LGGVMALVLSILILIIIPVLH, LSQCLFWLLVADLLXVTWIGG, and YVIXGQLASIXXXXIXIXXXX.

It belongs to the cytochrome b family. As to quaternary structure, the cytochrome bc1 complex contains 11 subunits: 3 respiratory subunits (MT-CYB, CYC1 and UQCRFS1), 2 core proteins (UQCRC1 and UQCRC2) and 6 low-molecular weight proteins (UQCRH/QCR6, UQCRB/QCR7, UQCRQ/QCR8, UQCR10/QCR9, UQCR11/QCR10 and a cleavage product of UQCRFS1). This cytochrome bc1 complex then forms a dimer. Requires heme b as cofactor.

It localises to the mitochondrion inner membrane. Component of the ubiquinol-cytochrome c reductase complex (complex III or cytochrome b-c1 complex) that is part of the mitochondrial respiratory chain. The b-c1 complex mediates electron transfer from ubiquinol to cytochrome c. Contributes to the generation of a proton gradient across the mitochondrial membrane that is then used for ATP synthesis. This chain is Cytochrome b (MT-CYB), found in Myotis goudotii (Malagasy mouse-eared bat).